A 376-amino-acid polypeptide reads, in one-letter code: Acetate kinase (376 aa).

Position 7 (N7) interacts with Mg(2+). ATP is bound at residue K14. Residue R71 coordinates substrate. Residue D128 is the Proton donor/acceptor of the active site. ATP contacts are provided by residues 188 to 192, 262 to 264, and 310 to 314; these read HLGNG, DFR, and GVGEN. E364 is a binding site for Mg(2+).

The protein belongs to the acetokinase family. Homodimer. The cofactor is Mg(2+). Mn(2+) is required as a cofactor.

The protein resides in the cytoplasm. It catalyses the reaction acetate + ATP = acetyl phosphate + ADP. Its pathway is metabolic intermediate biosynthesis; acetyl-CoA biosynthesis; acetyl-CoA from acetate: step 1/2. Its function is as follows. Catalyzes the formation of acetyl phosphate from acetate and ATP. Can also catalyze the reverse reaction. The protein is Acetate kinase of Mycolicibacterium smegmatis (strain ATCC 700084 / mc(2)155) (Mycobacterium smegmatis).